The primary structure comprises 126 residues: Actin-depolymerizing factor (126 aa).

The ADF-H domain occupies 1-126 (EDNCKLKFLE…SFDIIKSRAL (126 aa)).

The protein belongs to the actin-binding proteins ADF family. As to expression, preferentially in mature anther.

Functionally, actin-depolymerizing protein. Severs actin filaments (F-actin) and binds to actin monomers. In Brassica napus (Rape), this protein is Actin-depolymerizing factor.